The primary structure comprises 445 residues: MAAATDIGTRDVPSQTGKKPWYSILYVQVLIAILIGIVVGWLFPNLATNDWIKALGDGFIKLIKMVIAPIIFCTVVSGIAHIQNASKVGRVGVKALVYFEIVSTFALLLGLIVGNLAPIGHGLAAKPDAAAVANYVKQAEAQKSVDFVLNIIPDSVVGALARGDILQVLLFAILFGFALMALGERGHRLRDIIDDTAHAVFGVIAIVMKAAPVGAFGAMAFTIGKYGPAALGNLIGLIALFYITAGLFVVIVLGLIARFIGFSIFKFVAYIKDELLIVLGTSSSESALPQLMEKLERLGCSKPVVGLVVPTGYSFNLDGTNIYMTLATLFISQALGVDLSFSQQVTILIVAMLTSKGASGVTGAGFITLAATLSVVNPALVPGMAIVFSIDKFMSEVRALTNITGNGIAAVFVSWWEGELDHDLLQRRLNQQIDPSDVETAVTTG.

Transmembrane regions (helical) follow at residues 24-44, 62-82, 96-116, 163-183, 201-221, 237-257, 334-354, and 366-386; these read ILYV…WLFP, LIKM…IAHI, LVYF…VGNL, GDIL…MALG, FGVI…AMAF, LIAL…GLIA, ALGV…AMLT, and FITL…GMAI.

Belongs to the dicarboxylate/amino acid:cation symporter (DAACS) (TC 2.A.23) family.

Its subcellular location is the cell inner membrane. In terms of biological role, responsible for the transport of dicarboxylates such as succinate, fumarate, and malate from the periplasm across the membrane. The sequence is that of C4-dicarboxylate transport protein 2 from Bradyrhizobium sp. (strain ORS 278).